Here is a 294-residue protein sequence, read N- to C-terminus: MNFFQAIILGIVQALTEYLPVSSSAHIRIFGDLMLGSDPGAAFTAIIQIGTELAVILYFRHDIINILTHWFGCLFGRNGKDWKARMGRGDEYATLGWNIIVGSIPIVILGFTLQDVIETSLRNLWITVTVLLVFGVLLWVVDAKARQNKTMDDMTYRDAFLFGLGQSMALIPGVSRSGGTITVGRALGYTREAAVRLSFLMAIPAVFGSGLLETVKAVKNYKTDAMFPGWGPTLVAMVISFVLGYIVIIGFLKFVSTFSYKAFAIYRIGLAVVVALLLIVGVLPAIDPSVAAAA.

Transmembrane regions (helical) follow at residues 39–59 (PGAA…ILYF), 93–113 (ATLG…GFTL), 123–143 (NLWI…VVDA), 198–218 (SFLM…VKAV), 232–252 (PTLV…IGFL), and 268–288 (IGLA…AIDP).

Belongs to the UppP family.

The protein resides in the cell membrane. It catalyses the reaction di-trans,octa-cis-undecaprenyl diphosphate + H2O = di-trans,octa-cis-undecaprenyl phosphate + phosphate + H(+). Functionally, catalyzes the dephosphorylation of undecaprenyl diphosphate (UPP). Confers resistance to bacitracin. The sequence is that of Undecaprenyl-diphosphatase from Bifidobacterium longum subsp. infantis (strain ATCC 15697 / DSM 20088 / JCM 1222 / NCTC 11817 / S12).